Here is a 300-residue protein sequence, read N- to C-terminus: MTHLKISKTAPAVARFLPAGRIASVAAALSLFLSAQLAGAVTLEEVKARGYITIAIANEMPGSYTDPNGEVKGSEADVARRVLEKLGIKPENIQWVVTTFGSLIPGLQANRFDMTAAGMAIRPERCEKVIYSEPNSSYGEGMLVIKGNPRNFHSYEDVAQQGKIAIMAGADQLRMMQALGVPNENIITIAANADAISAVATGRADAYAAAASTAADLAKKSDKVELATPFQDPVIDGKIQRSWGAFSFNKESADLRDKFNEALLEFRKTDEFKQLLLGYGYLPESIAAIPDKTTKELCSN.

Positions M1–A27 are cleaved as a signal peptide.

This sequence belongs to the bacterial solute-binding protein 3 family.

Its subcellular location is the periplasm. Functionally, probably part of the binding-protein-dependent transport system y4tEFGH for an amino acid. The protein is Probable amino-acid ABC transporter periplasmic-binding protein y4tE of Sinorhizobium fredii (strain NBRC 101917 / NGR234).